A 475-amino-acid chain; its full sequence is Ribosomal RNA small subunit methyltransferase F (475 aa).

S-adenosyl-L-methionine-binding positions include 125–131 (AAAPGSK), E149, D176, and D194. Catalysis depends on C247, which acts as the Nucleophile.

This sequence belongs to the class I-like SAM-binding methyltransferase superfamily. RsmB/NOP family.

It localises to the cytoplasm. The catalysed reaction is cytidine(1407) in 16S rRNA + S-adenosyl-L-methionine = 5-methylcytidine(1407) in 16S rRNA + S-adenosyl-L-homocysteine + H(+). In terms of biological role, specifically methylates the cytosine at position 1407 (m5C1407) of 16S rRNA. The polypeptide is Ribosomal RNA small subunit methyltransferase F (Aeromonas hydrophila subsp. hydrophila (strain ATCC 7966 / DSM 30187 / BCRC 13018 / CCUG 14551 / JCM 1027 / KCTC 2358 / NCIMB 9240 / NCTC 8049)).